Consider the following 154-residue polypeptide: Resuscitation-promoting factor RpfD (154 aa).

The chain crosses the membrane as a helical span at residues 21–41 (IVCTVFIETAVVATMFVALLG).

It belongs to the transglycosylase family. Rpf subfamily.

The protein resides in the cell membrane. Its function is as follows. Factor that stimulates resuscitation of dormant cells. Has peptidoglycan (PG) hydrolytic activity. PG fragments could either directly activate the resuscitation pathway of dormant bacteria or serve as a substrate for endogenous Rpf, resulting in low molecular weight products with resuscitation activity. This chain is Resuscitation-promoting factor RpfD (rpfD), found in Mycobacterium tuberculosis (strain CDC 1551 / Oshkosh).